Here is a 140-residue protein sequence, read N- to C-terminus: Large ribosomal subunit protein uL16 (140 aa).

A compositionally biased stretch (basic residues) spans 1–17 (MPLMPKRVKHRKMHRGS). Residues 1-21 (MPLMPKRVKHRKMHRGSRSGN) are disordered.

This sequence belongs to the universal ribosomal protein uL16 family. As to quaternary structure, part of the 50S ribosomal subunit.

Binds 23S rRNA and is also seen to make contacts with the A and possibly P site tRNAs. This chain is Large ribosomal subunit protein uL16, found in Akkermansia muciniphila (strain ATCC BAA-835 / DSM 22959 / JCM 33894 / BCRC 81048 / CCUG 64013 / CIP 107961 / Muc).